Reading from the N-terminus, the 303-residue chain is Pantothenate synthetase (303 aa).

The interval 1-21 is disordered; sequence MIATGHGGAERRTTAGDGTAR. 48-55 is an ATP binding site; it reads MGALHDGH. The Proton donor role is filled by histidine 55. Residue glutamine 79 participates in (R)-pantoate binding. Residue glutamine 79 coordinates beta-alanine. Residue 165–168 participates in ATP binding; the sequence is GRKD. Glutamine 171 is a binding site for (R)-pantoate. 202–205 is a binding site for ATP; sequence ASSR.

The protein belongs to the pantothenate synthetase family. In terms of assembly, homodimer.

Its subcellular location is the cytoplasm. It catalyses the reaction (R)-pantoate + beta-alanine + ATP = (R)-pantothenate + AMP + diphosphate + H(+). It participates in cofactor biosynthesis; (R)-pantothenate biosynthesis; (R)-pantothenate from (R)-pantoate and beta-alanine: step 1/1. In terms of biological role, catalyzes the condensation of pantoate with beta-alanine in an ATP-dependent reaction via a pantoyl-adenylate intermediate. This chain is Pantothenate synthetase, found in Acidothermus cellulolyticus (strain ATCC 43068 / DSM 8971 / 11B).